The primary structure comprises 427 residues: Enolase (427 aa).

Glutamine 163 is a binding site for (2R)-2-phosphoglycerate. Glutamate 205 functions as the Proton donor in the catalytic mechanism. The Mg(2+) site is built by aspartate 242, glutamate 285, and aspartate 312. Residues lysine 337, arginine 366, serine 367, and lysine 388 each coordinate (2R)-2-phosphoglycerate. The active-site Proton acceptor is the lysine 337.

Belongs to the enolase family. It depends on Mg(2+) as a cofactor.

Its subcellular location is the cytoplasm. The protein localises to the secreted. It is found in the cell surface. It catalyses the reaction (2R)-2-phosphoglycerate = phosphoenolpyruvate + H2O. The protein operates within carbohydrate degradation; glycolysis; pyruvate from D-glyceraldehyde 3-phosphate: step 4/5. Functionally, catalyzes the reversible conversion of 2-phosphoglycerate (2-PG) into phosphoenolpyruvate (PEP). It is essential for the degradation of carbohydrates via glycolysis. The protein is Enolase of Rhodopseudomonas palustris (strain TIE-1).